Reading from the N-terminus, the 85-residue chain is Cytochrome c2 (85 aa).

Heme c contacts are provided by Cys-12, Cys-15, His-16, and Met-61.

Belongs to the cytochrome c family. Binds 1 heme c group covalently per subunit.

Functionally, cytochrome c2 is found mainly in purple, non-sulfur, photosynthetic bacteria where it functions as the electron donor to the oxidized bacteriochlorophyll in the photophosphorylation pathway. However, it may also have a role in the respiratory chain and is found in some non-photosynthetic bacteria. This chain is Cytochrome c2, found in Rubrivivax gelatinosus (Rhodocyclus gelatinosus).